The primary structure comprises 339 residues: Glycerol-3-phosphate dehydrogenase [NAD(P)+] (339 aa).

Positions 15, 16, 36, and 110 each coordinate NADPH. 3 residues coordinate sn-glycerol 3-phosphate: Lys-110, Gly-139, and Thr-141. Ala-143 serves as a coordination point for NADPH. Positions 195, 248, 258, 259, and 260 each coordinate sn-glycerol 3-phosphate. The Proton acceptor role is filled by Lys-195. Residue Arg-259 coordinates NADPH. Residues Val-283 and Glu-285 each coordinate NADPH.

This sequence belongs to the NAD-dependent glycerol-3-phosphate dehydrogenase family.

It is found in the cytoplasm. It catalyses the reaction sn-glycerol 3-phosphate + NAD(+) = dihydroxyacetone phosphate + NADH + H(+). It carries out the reaction sn-glycerol 3-phosphate + NADP(+) = dihydroxyacetone phosphate + NADPH + H(+). The protein operates within membrane lipid metabolism; glycerophospholipid metabolism. Catalyzes the reduction of the glycolytic intermediate dihydroxyacetone phosphate (DHAP) to sn-glycerol 3-phosphate (G3P), the key precursor for phospholipid synthesis. This chain is Glycerol-3-phosphate dehydrogenase [NAD(P)+], found in Cronobacter sakazakii (strain ATCC BAA-894) (Enterobacter sakazakii).